Consider the following 210-residue polypeptide: TM2 domain-containing protein C02F5.13 (210 aa).

Positions 1-18 (MRRLPWLIPFFLVNISNG) are cleaved as a signal peptide. Residues 19–138 (NNEFRIEFEY…PRTFTKSTPC (120 aa)) are Extracellular-facing. Asn91 is a glycosylation site (N-linked (GlcNAc...) asparagine). Residues 139-159 (IIYNGHYFLTTLLYSIFLGVV) traverse the membrane as a helical segment. In terms of domain architecture, TM2 spans 143–191 (GHYFLTTLLYSIFLGVVAVDRFCLGYSAMAVGKLMTLGGFGIWWIVDIF). Residues 160–178 (AVDRFCLGYSAMAVGKLMT) are Cytoplasmic-facing. The helical transmembrane segment at 179 to 199 (LGGFGIWWIVDIFLLVLGVLG) threads the bilayer. Topologically, residues 200–210 (PADDSSWEPYY) are extracellular.

This sequence belongs to the TM2 family.

The protein localises to the membrane. In Caenorhabditis elegans, this protein is TM2 domain-containing protein C02F5.13.